A 153-amino-acid polypeptide reads, in one-letter code: MKLNELYNNIGAKKNKKRIARGIGSGKGKTGGRGIKGQKSRSGVAIKGFEGGQTPMIKRLPKRGFNCISTKKYNIINIYNIEEALADGRLSADDTITKEKLVEAGVVNNKNNKKLVKLLSICSDDFTSPLSLKLDAYSAKAKDLIEKAGGKLL.

The disordered stretch occupies residues Arg21–Arg41. Residues Ile23–Ile35 are compositionally biased toward gly residues.

Belongs to the universal ribosomal protein uL15 family. In terms of assembly, part of the 50S ribosomal subunit.

In terms of biological role, binds to the 23S rRNA. The sequence is that of Large ribosomal subunit protein uL15 from Rickettsia massiliae (strain Mtu5).